The chain runs to 156 residues: Small ribosomal subunit protein uS7 (156 aa).

The protein belongs to the universal ribosomal protein uS7 family. As to quaternary structure, part of the 30S ribosomal subunit. Contacts proteins S9 and S11.

In terms of biological role, one of the primary rRNA binding proteins, it binds directly to 16S rRNA where it nucleates assembly of the head domain of the 30S subunit. Is located at the subunit interface close to the decoding center, probably blocks exit of the E-site tRNA. In Aeromonas hydrophila subsp. hydrophila (strain ATCC 7966 / DSM 30187 / BCRC 13018 / CCUG 14551 / JCM 1027 / KCTC 2358 / NCIMB 9240 / NCTC 8049), this protein is Small ribosomal subunit protein uS7.